Here is a 189-residue protein sequence, read N- to C-terminus: Leucine repeat adapter protein 25 (189 aa).

At Ser-28 the chain carries Phosphoserine. A disordered region spans residues 55–81; the sequence is LSRAARAPDGPRHAAGSANLGSAAGPR. Over residues 68–79 the composition is skewed to low complexity; it reads AAGSANLGSAAG. The LRR repeat unit spans residues 86-114; the sequence is LDSALAALRKEMVGLRQLDMSLLCQLWGL. The tract at residues 141–174 is disordered; sequence DSSYPPDAGLSDDDEPPDASLPPDPPPLTVPQTH. Residues 159–169 show a composition bias toward pro residues; it reads ASLPPDPPPLT. Ser-188 is modified (phosphoserine).

The protein belongs to the FAM89 family. As to quaternary structure, interacts with SKI. Interacts (via LRR repeat) with CDC42BPA (via AGC-kinase C-terminal domain) and CDC42BPB (via AGC-kinase C-terminal domain). Interacts (via LRR repeat) with LIMK1 (via LIM zinc-binding domains). Forms a tripartite complex with CDC42BPA, CDC42BPB and LIMK1.

Its subcellular location is the cytoplasm. The protein localises to the cell projection. It localises to the lamellipodium. In terms of biological role, negatively regulates TGF-beta-induced signaling; in cooperation with SKI prevents the translocation of SMAD2 from the nucleus to the cytoplasm in response to TGF-beta. Acts as an adapter that mediates the specific recognition of LIMK1 by CDC42BPA and CDC42BPB in the lamellipodia. LRAP25-mediated CDC42BPA/CDC42BPB targeting to LIMK1 and the lamellipodium results in LIMK1 activation and the subsequent phosphorylation of CFL1 which is important for lamellipodial F-actin regulation. This chain is Leucine repeat adapter protein 25, found in Rattus norvegicus (Rat).